Here is a 168-residue protein sequence, read N- to C-terminus: SPbeta prophage-derived uncharacterized protein YonX (168 aa).

A coiled-coil region spans residues 1 to 53 (MNAQLFNLESRLDELENEINTQYCELDTNLDALKSNRIELESQLEKFESSLTN).

This chain is SPbeta prophage-derived uncharacterized protein YonX (yonX), found in Bacillus subtilis (strain 168).